The sequence spans 339 residues: Glycerol-3-phosphate dehydrogenase [NAD(P)+] (339 aa).

Residues serine 15, tyrosine 16, histidine 36, and lysine 110 each contribute to the NADPH site. Positions 110, 139, and 141 each coordinate sn-glycerol 3-phosphate. An NADPH-binding site is contributed by alanine 143. Sn-glycerol 3-phosphate-binding residues include lysine 195, aspartate 248, serine 258, arginine 259, and asparagine 260. The active-site Proton acceptor is the lysine 195. An NADPH-binding site is contributed by arginine 259. Positions 283 and 285 each coordinate NADPH.

It belongs to the NAD-dependent glycerol-3-phosphate dehydrogenase family.

The protein localises to the cytoplasm. The enzyme catalyses sn-glycerol 3-phosphate + NAD(+) = dihydroxyacetone phosphate + NADH + H(+). It catalyses the reaction sn-glycerol 3-phosphate + NADP(+) = dihydroxyacetone phosphate + NADPH + H(+). Its pathway is membrane lipid metabolism; glycerophospholipid metabolism. Catalyzes the reduction of the glycolytic intermediate dihydroxyacetone phosphate (DHAP) to sn-glycerol 3-phosphate (G3P), the key precursor for phospholipid synthesis. The chain is Glycerol-3-phosphate dehydrogenase [NAD(P)+] from Pectobacterium atrosepticum (strain SCRI 1043 / ATCC BAA-672) (Erwinia carotovora subsp. atroseptica).